The chain runs to 133 residues: Cytochrome c' (133 aa).

Residues arginine 12, threonine 72, cysteine 122, cysteine 125, and histidine 126 each contribute to the heme c site.

Post-translationally, binds 1 heme c group covalently per subunit.

In terms of biological role, cytochrome c' is the most widely occurring bacterial c-type cytochrome. Cytochromes c' are high-spin proteins and the heme has no sixth ligand. Their exact function is not known. The protein is Cytochrome c' of Rhodocyclus tenuis (Rhodospirillum tenue).